Reading from the N-terminus, the 517-residue chain is DNA relaxase MbeA (517 aa).

Y19 (O-(5'-phospho-DNA)-tyrosine intermediate) is an active-site residue. H97, E104, and N106 together coordinate a divalent metal cation. Disordered stretches follow at residues 281-310 (YSPV…QEGR), 380-405 (PSVR…VTQS), and 496-517 (SLER…SLGW). Over residues 297–310 (GRGERGDDAAQEGR) the composition is skewed to basic and acidic residues. The span at 496 to 510 (SLERERQPEIQERTL) shows a compositional bias: basic and acidic residues.

The protein to E.coli MbaA and MbkA. In terms of assembly, interacts with MbeB and MbeC to form the relaxosome. The cofactor is Mn(2+). Co(2+) is required as a cofactor. Requires Ni(2+) as cofactor.

It carries out the reaction ATP-independent breakage of single-stranded DNA, followed by passage and rejoining.. Relaxase involved in plasmid ColE1 conjugative mobilization and is thus essential to promote the specific transfer of the plasmid during conjugation. First catalyzes the specific cleavage of one of the DNA strands at oriT, forming a covalent 5'-phosphotyrosine intermediate. The nic site corresponds to 5'-(1469)CTGG/CTTA(1462)-3' in the cleaved strand. The cleaved strand is then transferred through the dedicated type IV secretion apparatus. MbeA remains covalently linked at the 5' end of the strand, and once in the recipient cell, it probably catalyzes the rejoining of the two ends of the strand, re-forming the circular plasmid DNA. Is functional in vitro without a requirement for the conjugative accessory proteins. This Escherichia coli protein is DNA relaxase MbeA (mbeA).